A 78-amino-acid chain; its full sequence is Large ribosomal subunit protein bL28 (78 aa).

Residues 1–23 form a disordered region; it reads MSRVCQVSGKRVQTGNNVSHANN. A compositionally biased stretch (polar residues) spans 11-22; it reads RVQTGNNVSHAN.

Belongs to the bacterial ribosomal protein bL28 family.

This Xanthomonas campestris pv. campestris (strain 8004) protein is Large ribosomal subunit protein bL28.